Here is a 144-residue protein sequence, read N- to C-terminus: Maximins 3/H14 (144 aa).

The N-terminal stretch at 1–18 is a signal peptide; it reads MNFKYIVAVSFLIASAYA. 2 consecutive propeptides follow at residues 19–43 and 73–122; these read RSVQNDEQSLSQRDVLEEESLREIR and RTAE…KKEK. Residue isoleucine 143 is modified to Isoleucine amide.

The protein belongs to the bombinin family. As to expression, expressed by the skin glands.

The protein localises to the secreted. In terms of biological role, maximin-3 shows antibacterial activity against both Gram-positive and Gram-negative bacteria. It also shows antimicrobial activity against the fungus C.albicans, but not against A.flavus nor P.uticale. It has little hemolytic activity. It possess a significant cytotoxicity against tumor cell lines. It possess a significant anti-HIV activity. It shows high spermicidal activity. Its function is as follows. Maximin-H14 shows antimicrobial activity against bacteria and against the fungus C.albicans. Shows strong hemolytic activity. The chain is Maximins 3/H14 from Bombina maxima (Giant fire-bellied toad).